We begin with the raw amino-acid sequence, 138 residues long: Large ribosomal subunit protein uL16 (138 aa).

This sequence belongs to the universal ribosomal protein uL16 family. In terms of assembly, part of the 50S ribosomal subunit.

Functionally, binds 23S rRNA and is also seen to make contacts with the A and possibly P site tRNAs. The protein is Large ribosomal subunit protein uL16 of Mycoplasmoides gallisepticum (strain R(low / passage 15 / clone 2)) (Mycoplasma gallisepticum).